The chain runs to 310 residues: Ornithine carbamoyltransferase (310 aa).

Residues 58 to 61, Q85, R109, and 136 to 139 contribute to the carbamoyl phosphate site; these read STRT and HPCQ. L-ornithine-binding positions include N167, D227, and 231 to 232; that span reads SM. Residues 266–267 and R294 contribute to the carbamoyl phosphate site; that span reads CL.

It belongs to the aspartate/ornithine carbamoyltransferase superfamily. OTCase family.

It is found in the cytoplasm. The enzyme catalyses carbamoyl phosphate + L-ornithine = L-citrulline + phosphate + H(+). The protein operates within amino-acid biosynthesis; L-arginine biosynthesis; L-arginine from L-ornithine and carbamoyl phosphate: step 1/3. Functionally, reversibly catalyzes the transfer of the carbamoyl group from carbamoyl phosphate (CP) to the N(epsilon) atom of ornithine (ORN) to produce L-citrulline. This Rhodopseudomonas palustris (strain ATCC BAA-98 / CGA009) protein is Ornithine carbamoyltransferase.